The following is a 31-amino-acid chain: Histone H1.3 (31 aa).

The protein belongs to the histone H1/H5 family.

The protein resides in the nucleus. It is found in the chromosome. Functionally, histones H1 are necessary for the condensation of nucleosome chains into higher-order structures. The sequence is that of Histone H1.3 from Triticum aestivum (Wheat).